The following is a 159-amino-acid chain: MTSLVYFSSVSENTHRFVQRLGLPATRIPIHDRDGSFRVDEPYVLILPTYGGGVTVTGRDTSYVPKPVIRFLNNPHNRSLIRAVIAAGNTNFGESFCYAGNIISQKCHVPFLYRFELMGTAEDVDRVREGLGEFWNHLETEKEHGQWRQPSLTRSRQEA.

This sequence belongs to the NrdI family.

Its function is as follows. Probably involved in ribonucleotide reductase function. The sequence is that of Protein NrdI from Rhodococcus erythropolis (strain PR4 / NBRC 100887).